The primary structure comprises 225 residues: 2-C-methyl-D-erythritol 4-phosphate cytidylyltransferase (225 aa).

It belongs to the IspD/TarI cytidylyltransferase family. IspD subfamily.

The enzyme catalyses 2-C-methyl-D-erythritol 4-phosphate + CTP + H(+) = 4-CDP-2-C-methyl-D-erythritol + diphosphate. Its pathway is isoprenoid biosynthesis; isopentenyl diphosphate biosynthesis via DXP pathway; isopentenyl diphosphate from 1-deoxy-D-xylulose 5-phosphate: step 2/6. Its function is as follows. Catalyzes the formation of 4-diphosphocytidyl-2-C-methyl-D-erythritol from CTP and 2-C-methyl-D-erythritol 4-phosphate (MEP). This Prochlorococcus marinus (strain MIT 9313) protein is 2-C-methyl-D-erythritol 4-phosphate cytidylyltransferase.